The sequence spans 395 residues: Probable beta-1,3-galactosyltransferase 8 (395 aa).

A helical; Signal-anchor for type II membrane protein transmembrane segment spans residues 5-27 (AASGKAIIVLCLASFLAGSLFMS). N-linked (GlcNAc...) asparagine glycosylation is present at N117.

This sequence belongs to the glycosyltransferase 31 family. Mn(2+) is required as a cofactor.

Its subcellular location is the golgi apparatus membrane. It functions in the pathway protein modification; protein glycosylation. In terms of biological role, beta-1,3-galactosyltransferase that transfers galactose from UDP-galactose to substrates with a terminal glycosyl residue. This Arabidopsis thaliana (Mouse-ear cress) protein is Probable beta-1,3-galactosyltransferase 8 (B3GALT8).